Here is an 89-residue protein sequence, read N- to C-terminus: Small ribosomal subunit protein uS15 (89 aa).

Positions methionine 1–aspartate 21 are enriched in basic and acidic residues. A disordered region spans residues methionine 1–glycine 23.

The protein belongs to the universal ribosomal protein uS15 family. Part of the 30S ribosomal subunit. Forms a bridge to the 50S subunit in the 70S ribosome, contacting the 23S rRNA.

In terms of biological role, one of the primary rRNA binding proteins, it binds directly to 16S rRNA where it helps nucleate assembly of the platform of the 30S subunit by binding and bridging several RNA helices of the 16S rRNA. Functionally, forms an intersubunit bridge (bridge B4) with the 23S rRNA of the 50S subunit in the ribosome. This chain is Small ribosomal subunit protein uS15, found in Bacillus velezensis (strain DSM 23117 / BGSC 10A6 / LMG 26770 / FZB42) (Bacillus amyloliquefaciens subsp. plantarum).